The sequence spans 131 residues: Arsenate reductase 2 (131 aa).

Residues Cys10, Cys82, and Cys89 each act as nucleophile in the active site. 2 cysteine pairs are disulfide-bonded: Cys10–Cys82 and Cys82–Cys89.

This sequence belongs to the low molecular weight phosphotyrosine protein phosphatase family. Thioredoxin-coupled ArsC subfamily.

The protein resides in the cytoplasm. It carries out the reaction arsenate + [thioredoxin]-dithiol + H(+) = arsenite + [thioredoxin]-disulfide + H2O. Catalyzes the reduction of arsenate [As(V)] to arsenite [As(III)]. The sequence is that of Arsenate reductase 2 from Staphylococcus haemolyticus (strain JCSC1435).